Reading from the N-terminus, the 289-residue chain is Elongation factor Ts (289 aa).

The tract at residues 82–85 (TDFL) is involved in Mg(2+) ion dislocation from EF-Tu.

It belongs to the EF-Ts family.

Its subcellular location is the cytoplasm. Its function is as follows. Associates with the EF-Tu.GDP complex and induces the exchange of GDP to GTP. It remains bound to the aminoacyl-tRNA.EF-Tu.GTP complex up to the GTP hydrolysis stage on the ribosome. This chain is Elongation factor Ts, found in Pseudomonas aeruginosa (strain LESB58).